The sequence spans 113 residues: Large ribosomal subunit protein bL19 (113 aa).

This sequence belongs to the bacterial ribosomal protein bL19 family.

In terms of biological role, this protein is located at the 30S-50S ribosomal subunit interface and may play a role in the structure and function of the aminoacyl-tRNA binding site. The protein is Large ribosomal subunit protein bL19 of Moorella thermoacetica (strain ATCC 39073 / JCM 9320).